A 327-amino-acid chain; its full sequence is DNA-directed RNA polymerase subunit alpha (327 aa).

Residues 1–233 are alpha N-terminal domain (alpha-NTD); it reads MVREKVKVST…NLFIPFLHVE (233 aa). The tract at residues 267–327 is alpha C-terminal domain (alpha-CTD); it reads LAFQYIFIDQ…KKILDILEKK (61 aa).

Belongs to the RNA polymerase alpha chain family. In plastids the minimal PEP RNA polymerase catalytic core is composed of four subunits: alpha, beta, beta', and beta''. When a (nuclear-encoded) sigma factor is associated with the core the holoenzyme is formed, which can initiate transcription.

It localises to the plastid. The protein resides in the chloroplast. The enzyme catalyses RNA(n) + a ribonucleoside 5'-triphosphate = RNA(n+1) + diphosphate. Its function is as follows. DNA-dependent RNA polymerase catalyzes the transcription of DNA into RNA using the four ribonucleoside triphosphates as substrates. The chain is DNA-directed RNA polymerase subunit alpha from Crucihimalaya wallichii (Rock-cress).